Here is a 139-residue protein sequence, read N- to C-terminus: GSK3B-interacting protein (139 aa).

The interval 41-45 is required for PRKAR2A interaction; contributes to a protective effect against H(2)O(2)-induced apoptosis; that stretch reads VNDVL. Positions 115–139 are interaction with GSK3B and acts as a GSK3B inhibitor; the sequence is SPAYREAFGNALLQRLEALKRDGQS.

Belongs to the GSKIP family. In terms of assembly, forms a complex composed of PRKAR2A or PRKAR2B, GSK3B and GSKIP through GSKIP interaction; facilitates PKA-induced phosphorylation of GSK3B leading to GSK3B inactivation; recruits DNM1L through GSK3B for PKA-mediated phosphorylation of DNM1L; promotes beta-catenin degradation through GSK3B-induced phosphorylation of beta-catenin; stabilizes beta-catenin and enhances Wnt-induced signaling through PKA-induced phosphorylation of beta-catenin. Interacts with GSK3B; induces GSK3B-mediated phosphorylation of GSKIP and inhibits GSK3B kinase activity. In terms of processing, phosphorylated by GSK3B.

It localises to the cytoplasm. The protein resides in the nucleus. Its function is as follows. A-kinase anchoring protein for GSK3B and PKA that regulates or facilitates their kinase activity towards their targets. The ternary complex enhances Wnt-induced signaling by facilitating the GSK3B- and PKA-induced phosphorylation of beta-catenin leading to beta-catenin degradation and stabilization respectively. Upon cAMP activation, the ternary complex contributes to neuroprotection against oxidative stress-induced apoptosis by facilitating the PKA-induced phosphorylation of DML1 and PKA-induced inactivation of GSK3B. During neurite outgrowth promotes neuron proliferation; while increases beta-catenin-induced transcriptional activity through GSK3B kinase activity inhibition, reduces N-cadherin level to promote cell cycle progression. May play a role in cleft palate formation and is required for postnatal life through modulation of the activity of GSK3B during development. The protein is GSK3B-interacting protein of Mus musculus (Mouse).